A 122-amino-acid chain; its full sequence is Small ribosomal subunit protein uS13 (122 aa).

The tract at residues 93–122 (RRGLPVRGQNTKTNARTRKGPKRTAGGKKK) is disordered. Over residues 107–122 (ARTRKGPKRTAGGKKK) the composition is skewed to basic residues.

Belongs to the universal ribosomal protein uS13 family. Part of the 30S ribosomal subunit. Forms a loose heterodimer with protein S19. Forms two bridges to the 50S subunit in the 70S ribosome.

In terms of biological role, located at the top of the head of the 30S subunit, it contacts several helices of the 16S rRNA. In the 70S ribosome it contacts the 23S rRNA (bridge B1a) and protein L5 of the 50S subunit (bridge B1b), connecting the 2 subunits; these bridges are implicated in subunit movement. Contacts the tRNAs in the A and P-sites. The protein is Small ribosomal subunit protein uS13 of Syntrophomonas wolfei subsp. wolfei (strain DSM 2245B / Goettingen).